Reading from the N-terminus, the 273-residue chain is 6-carboxyhexanoate--CoA ligase (273 aa).

It belongs to the BioW family. In terms of assembly, homodimer. Requires Mg(2+) as cofactor.

It carries out the reaction heptanedioate + ATP + CoA = 6-carboxyhexanoyl-CoA + AMP + diphosphate. Its pathway is metabolic intermediate metabolism; pimeloyl-CoA biosynthesis; pimeloyl-CoA from pimelate: step 1/1. Its function is as follows. Catalyzes the transformation of pimelate into pimeloyl-CoA with concomitant hydrolysis of ATP to AMP. This Alkalihalophilus pseudofirmus (strain ATCC BAA-2126 / JCM 17055 / OF4) (Bacillus pseudofirmus) protein is 6-carboxyhexanoate--CoA ligase.